The sequence spans 71 residues: NAD(P)H-quinone oxidoreductase subunit O (71 aa).

Belongs to the complex I NdhO subunit family. In terms of assembly, NDH-1 can be composed of about 15 different subunits; different subcomplexes with different compositions have been identified which probably have different functions.

It is found in the cellular thylakoid membrane. The enzyme catalyses a plastoquinone + NADH + (n+1) H(+)(in) = a plastoquinol + NAD(+) + n H(+)(out). It carries out the reaction a plastoquinone + NADPH + (n+1) H(+)(in) = a plastoquinol + NADP(+) + n H(+)(out). Functionally, NDH-1 shuttles electrons from an unknown electron donor, via FMN and iron-sulfur (Fe-S) centers, to quinones in the respiratory and/or the photosynthetic chain. The immediate electron acceptor for the enzyme in this species is believed to be plastoquinone. Couples the redox reaction to proton translocation, and thus conserves the redox energy in a proton gradient. Cyanobacterial NDH-1 also plays a role in inorganic carbon-concentration. The protein is NAD(P)H-quinone oxidoreductase subunit O of Nostoc punctiforme (strain ATCC 29133 / PCC 73102).